A 396-amino-acid chain; its full sequence is Lipid-A-disaccharide synthase (396 aa).

This sequence belongs to the LpxB family.

The enzyme catalyses a lipid X + a UDP-2-N,3-O-bis[(3R)-3-hydroxyacyl]-alpha-D-glucosamine = a lipid A disaccharide + UDP + H(+). It functions in the pathway bacterial outer membrane biogenesis; LPS lipid A biosynthesis. Functionally, condensation of UDP-2,3-diacylglucosamine and 2,3-diacylglucosamine-1-phosphate to form lipid A disaccharide, a precursor of lipid A, a phosphorylated glycolipid that anchors the lipopolysaccharide to the outer membrane of the cell. The protein is Lipid-A-disaccharide synthase of Rhodopseudomonas palustris (strain BisB18).